Consider the following 780-residue polypeptide: Tyrosine-protein phosphatase non-receptor type 12 (780 aa).

M1 carries the N-acetylmethionine modification. The residue at position 19 (S19) is a Phosphoserine. Positions 28-293 (FARDFMRLRR…ELVHRAIAQL (266 aa)) constitute a Tyrosine-protein phosphatase domain. Residues R36, 63–67 (RYKDI), D199, 231–237 (CSAGCGR), and Q278 each bind substrate. The active-site Phosphocysteine intermediate is the C231. Phosphoserine occurs at positions 332, 435, 449, and 468. The interval 345-438 (VEGDAKEEIL…KLERNLSFEI (94 aa)) is interaction with TGFB1I1. The span at 502–519 (QSNKVSVTPPEESQNSDT) shows a compositional bias: polar residues. Disordered regions lie at residues 502 to 639 (QSNK…STES), 657 to 725 (GTTH…EKCD), and 744 to 780 (SDKR…SEWT). Residues T509 and T519 each carry the phosphothreonine modification. A compositionally biased stretch (basic and acidic residues) spans 521-533 (PRPDRLPLDEKGH). Polar residues-rich tracts occupy residues 552 to 577 (EGNS…TQVE) and 587 to 601 (TSPL…TNPL). S567 carries the post-translational modification Phosphoserine. T569 is modified (phosphothreonine). A phosphoserine mark is found at S571 and S596. T598 carries the post-translational modification Phosphothreonine. Positions 602-613 (HSDDSDSDERNS) are enriched in basic and acidic residues. S603, S606, S608, and S613 each carry phosphoserine. Over residues 622–639 (TNISTASATVSAATSTES) the composition is skewed to low complexity. Phosphoserine occurs at positions 673 and 689. The segment covering 690 to 703 (EHNTPVRSEWSELQ) has biased composition (polar residues). T693 carries the post-translational modification Phosphothreonine. Basic and acidic residues-rich tracts occupy residues 704–725 (SQER…EKCD) and 771–780 (GPRDPPSEWT).

It belongs to the protein-tyrosine phosphatase family. Non-receptor class 4 subfamily. As to quaternary structure, interacts with TGFB1I1. Interacts with PSTPIP1. Interacts with PTK2B/PYK2. Interacts with LPXN. Interacts with SORBS2; this interaction greatly enhances WASF1 dephosphorylation and might mediate partial translocation to focal adhesion sites. Post-translationally, phosphorylated by STK24/MST3 and this results in inhibition of its activity.

It is found in the cytoplasm. The protein localises to the cell junction. It localises to the focal adhesion. The protein resides in the cell projection. Its subcellular location is the podosome. The catalysed reaction is O-phospho-L-tyrosyl-[protein] + H2O = L-tyrosyl-[protein] + phosphate. Dephosphorylates a range of proteins, and thereby regulates cellular signaling cascades. Dephosphorylates cellular tyrosine kinases, such as ERBB2 and PTK2B/PYK2, and thereby regulates signaling via ERBB2 and PTK2B/PYK2. Selectively dephosphorylates ERBB2 phosphorylated at 'Tyr-1112', 'Tyr-1196', and/or 'Tyr-1248'. The protein is Tyrosine-protein phosphatase non-receptor type 12 (PTPN12) of Homo sapiens (Human).